A 156-amino-acid polypeptide reads, in one-letter code: Arginine repressor (156 aa).

It belongs to the ArgR family.

It localises to the cytoplasm. It participates in amino-acid biosynthesis; L-arginine biosynthesis [regulation]. Functionally, regulates arginine biosynthesis genes. The sequence is that of Arginine repressor from Shewanella loihica (strain ATCC BAA-1088 / PV-4).